Consider the following 516-residue polypeptide: Glycerol-3-phosphate dehydrogenase 1 (516 aa).

FAD is bound at residue 28 to 56; that stretch reads DVIVIGGGITGVGIALDAATRGLTVALVE.

Belongs to the FAD-dependent glycerol-3-phosphate dehydrogenase family. FAD is required as a cofactor.

The protein resides in the cytoplasm. It catalyses the reaction a quinone + sn-glycerol 3-phosphate = dihydroxyacetone phosphate + a quinol. In Mycobacterium bovis (strain ATCC BAA-935 / AF2122/97), this protein is Glycerol-3-phosphate dehydrogenase 1 (glpD1).